The following is a 128-amino-acid chain: U24-ctenitoxin-Pn1a (128 aa).

Thyroglobulin type-1 domains are found at residues 4 to 67 (KSDC…ECGC) and 72 to 127 (KERK…SLKC). 4 cysteine pairs are disulfide-bonded: Cys7–Cys27, Cys38–Cys45, Cys47–Cys67, and Cys107–Cys127.

Expressed by the venom gland.

The protein resides in the secreted. In terms of biological role, cysteine proteinase inhibitor. In Phoneutria nigriventer (Brazilian armed spider), this protein is U24-ctenitoxin-Pn1a.